We begin with the raw amino-acid sequence, 218 residues long: MTQDEMKKAAAYAALEYVQPDSIVGVGTGSTVTHFIDALATIKDLIKGAVSSSDESTARLQSYGIDVFDLNEVSELSIYVDGADEINPYNHMIKGGGAALTREKIISAVAEKFICIVDNTKNVDILGDFPLPIEVIPMARSYVARELVKLGGDPVYRQGVVTDNGNVILDVHNLKIAEPLKLEAQINAIVGVVTNGLFANRAADVVLVGTPEGVKTLK.

Substrate is bound by residues threonine 28–threonine 31, aspartate 81–aspartate 84, and lysine 94–glycine 97. Glutamate 103 acts as the Proton acceptor in catalysis. Lysine 121 contributes to the substrate binding site.

Belongs to the ribose 5-phosphate isomerase family. As to quaternary structure, homodimer.

The catalysed reaction is aldehydo-D-ribose 5-phosphate = D-ribulose 5-phosphate. It participates in carbohydrate degradation; pentose phosphate pathway; D-ribose 5-phosphate from D-ribulose 5-phosphate (non-oxidative stage): step 1/1. Its function is as follows. Catalyzes the reversible conversion of ribose-5-phosphate to ribulose 5-phosphate. The protein is Ribose-5-phosphate isomerase A of Psychromonas ingrahamii (strain DSM 17664 / CCUG 51855 / 37).